The chain runs to 326 residues: MEALTFMKFWLTNNTTIKPRREIRISESAVDSTTGSEDPDLDLCEGEDSFFELKISLSDFKTPKEKQRLETTTTTTTYSVSNKSKVLPFVDISSKPQQSPTTLLKSGQKFRAFSFKKSEKSTTTEKKKEENNRTSLNVRFRVDDETTTTSFRKTASIARSQQTDDTMFDDSVSKRFFSLIKPLYTKSTKKQSSSTITSPTSSPATREKQRSNIPSGMRSVRRQLGKSRSASAAIGGMSPANRIDESLQVQQDGIQSAILHCKKSFHGSRESSLLSRSTSESSSQEKLSTSSSEDSYLFSRISSDSISEKSMDSLTSIKEQREKISD.

Disordered stretches follow at residues 188–239 (TKKQ…GMSP) and 267–326 (GSRE…KISD). Composition is skewed to low complexity over residues 190-202 (KQSS…PTSS) and 270-305 (ESSL…SSDS).

Expressed in roots.

The protein localises to the cell membrane. Its subcellular location is the cytoplasm. It localises to the cytosol. Its function is as follows. Positive effector of CLE45 peptide signaling. Post-transcriptionally regulated amplifier of the CLE45 peptide signal that acts downstream of BAM3 in the regulation of the transition of root protophloem cells from proliferation to differentiation; thus preventing primary root elongation but stimulating lateral roots development. The protein is Membrane-associated kinase regulator 5 of Arabidopsis thaliana (Mouse-ear cress).